Consider the following 325-residue polypeptide: NADH-quinone oxidoreductase subunit H (325 aa).

8 consecutive transmembrane segments (helical) span residues 11–31, 81–101, 114–134, 154–174, 186–206, 237–257, 265–285, and 304–324; these read ILLT…CGAF, VIFT…FAIV, IGIL…LFAG, LSYE…AGSF, VWNV…GVAV, FFVG…TLFF, LPPF…FILI, and ICLP…LWQA.

It belongs to the complex I subunit 1 family. NDH-1 is composed of 13 different subunits. Subunits NuoA, H, J, K, L, M, N constitute the membrane sector of the complex.

It localises to the cell inner membrane. It carries out the reaction a quinone + NADH + 5 H(+)(in) = a quinol + NAD(+) + 4 H(+)(out). Its function is as follows. NDH-1 shuttles electrons from NADH, via FMN and iron-sulfur (Fe-S) centers, to quinones in the respiratory chain. The immediate electron acceptor for the enzyme in this species is believed to be ubiquinone. Couples the redox reaction to proton translocation (for every two electrons transferred, four hydrogen ions are translocated across the cytoplasmic membrane), and thus conserves the redox energy in a proton gradient. This subunit may bind ubiquinone. The sequence is that of NADH-quinone oxidoreductase subunit H from Escherichia coli O139:H28 (strain E24377A / ETEC).